The chain runs to 190 residues: dTTP/UTP pyrophosphatase (190 aa).

Asp-70 (proton acceptor) is an active-site residue.

Belongs to the Maf family. YhdE subfamily. A divalent metal cation is required as a cofactor.

It localises to the cytoplasm. It carries out the reaction dTTP + H2O = dTMP + diphosphate + H(+). It catalyses the reaction UTP + H2O = UMP + diphosphate + H(+). In terms of biological role, nucleoside triphosphate pyrophosphatase that hydrolyzes dTTP and UTP. May have a dual role in cell division arrest and in preventing the incorporation of modified nucleotides into cellular nucleic acids. This chain is dTTP/UTP pyrophosphatase, found in Paramagnetospirillum magneticum (strain ATCC 700264 / AMB-1) (Magnetospirillum magneticum).